A 389-amino-acid chain; its full sequence is Alpha-(1,3)-fucosyltransferase 7 (389 aa).

Residues 1–55 are Cytoplasmic-facing; that stretch reads MPTPCPPACLSTPGTHRLLPFPDWKAPSWESRKEATCNSSSPGPWAEPTVQGYHP. Residues 56 to 78 traverse the membrane as a helical; Signal-anchor for type II membrane protein segment; it reads TRRLRAWGGLAGGATFMVIWFFW. Topologically, residues 79 to 389 are lumenal; that stretch reads LWGSAPGSAP…YEDLESWFQA (311 aa). Cys-115 and Cys-123 are joined by a disulfide. The N-linked (GlcNAc...) asparagine glycan is linked to Asn-128. The cysteines at positions 258 and 261 are disulfide-linked. Residue Asn-338 is glycosylated (N-linked (GlcNAc...) asparagine). A disulfide bridge links Cys-365 with Cys-368.

The protein belongs to the glycosyltransferase 10 family. Post-translationally, N-glycosylated. Highly expressed in lung and bone marrow and to a much lesser extent in spleen, salivary gland and skeletal muscle.

It localises to the golgi apparatus. The protein resides in the golgi stack membrane. It catalyses the reaction an N-acetyl-alpha-neuraminyl-(2-&gt;3)-beta-D-galactosyl-(1-&gt;4)-N-acetyl-beta-D-glucosaminyl derivative + GDP-beta-L-fucose = an alpha-Neu5Ac-(2-&gt;3)-beta-D-Gal-(1-&gt;4)-[alpha-L-Fuc-(1-&gt;3)]-beta-D-GlcNAc derivative + GDP + H(+). The catalysed reaction is an alpha-Neu5Ac-(2-&gt;3)-beta-D-Gal-(1-&gt;4)-beta-D-GlcNAc6S derivative + GDP-beta-L-fucose = an alpha-Neu5Ac-(2-&gt;3)-beta-D-Gal-(1-&gt;4)-[alpha-L-Fuc-(1-&gt;3)]-beta-D-GlcNAc6S derivative + GDP + H(+). It carries out the reaction a neolactoside IV(3)-alpha-NeuAc-nLc4Cer + GDP-beta-L-fucose = a neolactoside IV(3)-alpha-NeuNAc,III(3)-alpha-Fuc-nLc4Cer + GDP + H(+). The enzyme catalyses a neolactoside VI(3)-alpha-NeuNAc-nLc6Cer + GDP-beta-L-fucose = a neolactoside VI(3)-alpha-NeuAc,V(3)-alphaFuc-nLc6Cer + GDP + H(+). It catalyses the reaction an alpha-Neu5Ac-(2-&gt;3)-beta-D-Gal-(1-&gt;4)-beta-D-GlcNAc-(1-&gt;3)-beta-D-Gal-(1-&gt;4)-[alpha-L-Fuc-(1-&gt;3)]-beta-D-GlcNAc derivative + GDP-beta-L-fucose = an alpha-Neu5Ac-(2-&gt;3)-beta-D-Gal-(1-&gt;4)-[alpha-L-Fuc-(1-&gt;3)]-beta-D-GlcNAc-(1-&gt;3)-beta-D-Gal-(1-&gt;4)-[alpha-L-Fuc-(1-&gt;3)]-beta-D-GlcNAc derivative + GDP + H(+). The catalysed reaction is alpha-Neu5Ac-(2-&gt;3)-beta-D-Gal-(1-&gt;4)-beta-D-GlcNAc-(1-&gt;3)-beta-D-Gal-(1-&gt;4)-D-Glc + GDP-beta-L-fucose = alpha-Neu5Ac-(2-&gt;3)-beta-D-Gal-(1-&gt;4)-[alpha-L-Fuc-(1-&gt;3)]-beta-D-GlcNAc-(1-&gt;3)-beta-D-Gal-(1-&gt;4)-D-Glc + GDP + H(+). It carries out the reaction alpha-Neu5Ac-(2-&gt;3)-beta-D-Gal-(1-&gt;4)-beta-D-GlcNAc-(1-&gt;3)-beta-D-Gal-(1-&gt;4)-[alpha-L-Fuc-(1-&gt;3)]-beta-D-GlcNAc-(1-&gt;3)-beta-D-Gal-(1-&gt;4)-beta-D-GlcNAc + GDP-beta-L-fucose = alpha-Neu5Ac-(2-&gt;3)-beta-D-Gal-(1-&gt;4)-[alpha-L-Fuc-(1-&gt;3)]-beta-D-GlcNAc-(1-&gt;3)-beta-D-Gal-(1-&gt;4)-[alpha-L-Fuc-(1-&gt;3)]-beta-D-GlcNAc-(1-&gt;3)-beta-D-Gal-(1-&gt;4)-beta-D-GlcNAc + GDP + H(+). The enzyme catalyses alpha-Neu5Ac-(2-&gt;3)-beta-D-Gal-(1-&gt;4)-beta-D-GlcNAc-(1-&gt;3)-beta-D-Gal-(1-&gt;4)-beta-D-GlcNAc-(1-&gt;3)-beta-D-Gal-(1-&gt;4)-beta-D-GlcNAc + GDP-beta-L-fucose = alpha-Neu5Ac-(2-&gt;3)-beta-D-Gal-(1-&gt;4)-[alpha-L-Fuc-(1-&gt;3)]-beta-D-GlcNAc-(1-&gt;3)-beta-D-Gal-(1-&gt;4)-beta-D-GlcNAc-(1-&gt;3)-beta-D-Gal-(1-&gt;4)-beta-D-GlcNAc + GDP + H(+). It participates in protein modification; protein glycosylation. Its activity is regulated as follows. Inhibited by NaCl. Inhibited by GDP in a concentration dependent manner, with an IC(50) value of 93 uM. Also inhibited by GMP and GTP. Inhibited by N-ethylmaleimide. Activated by poly(ethylene glycol) by enhancing the thermal stability of FUT7. Activated by Mn2+, Ca2+, and Mg2+. Both panosialin A and B inhibit activity with IC(50) values of 4.8 and 5.3 ug/ml, respectively. Inhibited by gallic acid (GA) and (-)-epigallocatechin gallate (EGCG) in a time-dependent and irreversible manner with IC(50) values of 60 and 700 nM, respectively. In terms of biological role, catalyzes the transfer of L-fucose, from a guanosine diphosphate-beta-L-fucose, to the N-acetyl glucosamine (GlcNAc) of a distal alpha2,3 sialylated lactosamine unit of a glycoprotein or a glycolipid-linked sialopolylactosamines chain through an alpha-1,3 glycosidic linkage and participates in the final fucosylation step in the biosynthesis of the sialyl Lewis X (sLe(x)), a carbohydrate involved in cell and matrix adhesion during leukocyte trafficking and fertilization. In vitro, also synthesizes sialyl-dimeric-Lex structures, from VIM-2 structures and both di-fucosylated and trifucosylated structures from mono-fucosylated precursors. However does not catalyze alpha 1-3 fucosylation when an internal alpha 1-3 fucosylation is present in polylactosamine chain and the fucosylation rate of the internal GlcNAc residues is reduced once fucose has been added to the distal GlcNAc. Also catalyzes the transfer of a fucose from GDP-beta-fucose to the 6-sulfated a(2,3)sialylated substrate to produce 6-sulfo sLex mediating significant L-selectin-dependent cell adhesion. Through sialyl-Lewis(x) biosynthesis, can control SELE- and SELP-mediated cell adhesion with leukocytes and allows leukocytes tethering and rolling along the endothelial tissue thereby enabling the leukocytes to accumulate at a site of inflammation. May enhance embryo implantation through sialyl Lewis X (sLeX)-mediated adhesion of embryo cells to endometrium. May affect insulin signaling by up-regulating the phosphorylation and expression of some signaling molecules involved in the insulin-signaling pathway through SLe(x) which is present on the glycans of the INSRR alpha subunit. The polypeptide is Alpha-(1,3)-fucosyltransferase 7 (Mus musculus (Mouse)).